Here is a 436-residue protein sequence, read N- to C-terminus: GTPase Der (436 aa).

EngA-type G domains lie at 4-167 and 176-351; these read PVIA…PKIE and IRFS…ESHS. Residues 10–17, 57–61, 119–122, 182–189, 229–233, and 294–297 each bind GTP; these read GRPNVGKS, DTGGI, NKVD, DTAGM, and NKWD. Positions 352–436 constitute a KH-like domain; the sequence is IRVQTNVLND…PIHIIARARD (85 aa).

It belongs to the TRAFAC class TrmE-Era-EngA-EngB-Septin-like GTPase superfamily. EngA (Der) GTPase family. In terms of assembly, associates with the 50S ribosomal subunit.

Functionally, GTPase that plays an essential role in the late steps of ribosome biogenesis. This is GTPase Der from Bacillus mycoides (strain KBAB4) (Bacillus weihenstephanensis).